A 162-amino-acid chain; its full sequence is Small ribosomal subunit protein uS13 (162 aa).

The segment at 142–162 is disordered; the sequence is RGQRTKSTGRRGSTVGVSRKK.

The protein belongs to the universal ribosomal protein uS13 family. Part of the 30S ribosomal subunit. Forms a loose heterodimer with protein S19. Forms two bridges to the 50S subunit in the 70S ribosome.

Functionally, located at the top of the head of the 30S subunit, it contacts several helices of the 16S rRNA. In the 70S ribosome it contacts the 23S rRNA (bridge B1a) and protein L5 of the 50S subunit (bridge B1b), connecting the 2 subunits; these bridges are implicated in subunit movement. This is Small ribosomal subunit protein uS13 from Methanosarcina mazei (strain ATCC BAA-159 / DSM 3647 / Goe1 / Go1 / JCM 11833 / OCM 88) (Methanosarcina frisia).